Here is a 273-residue protein sequence, read N- to C-terminus: Hydroxyethylthiazole kinase (273 aa).

Substrate is bound at residue M41. ATP-binding residues include R117 and T170. G197 contributes to the substrate binding site.

Belongs to the Thz kinase family. Mg(2+) serves as cofactor.

It carries out the reaction 5-(2-hydroxyethyl)-4-methylthiazole + ATP = 4-methyl-5-(2-phosphooxyethyl)-thiazole + ADP + H(+). The protein operates within cofactor biosynthesis; thiamine diphosphate biosynthesis; 4-methyl-5-(2-phosphoethyl)-thiazole from 5-(2-hydroxyethyl)-4-methylthiazole: step 1/1. In terms of biological role, catalyzes the phosphorylation of the hydroxyl group of 4-methyl-5-beta-hydroxyethylthiazole (THZ). The protein is Hydroxyethylthiazole kinase of Clostridium acetobutylicum (strain ATCC 824 / DSM 792 / JCM 1419 / IAM 19013 / LMG 5710 / NBRC 13948 / NRRL B-527 / VKM B-1787 / 2291 / W).